A 79-amino-acid chain; its full sequence is MNGFGRLEHFSGAIYEGHFKDNMFHGLGTYTFPNGAKYTGNFNENRVEGEGQYTDIQGLEWCGNFHFTAAPGLRLKLHM.

MORN repeat units lie at residues 15-37 and 38-60; these read YEGHFKDNMFHGLGTYTFPNGAK and YTGNFNENRVEGEGQYTDIQGLE.

This chain is MORN repeat-containing protein 2 (MORN2), found in Bos taurus (Bovine).